The primary structure comprises 228 residues: Claudin-10 (228 aa).

The chain crosses the membrane as a helical span at residues 1 to 21 (MASTASEIIAFMVSISGWVLV). Residues 22-80 (SSTLPTDYWKVSTIDGTVITTATYWANLWKACVTDSTGVSNCKDFPSMLALDGYIQACR) lie on the Extracellular side of the membrane. Residues 81-101 (GLMIAAVSLGFFGSIFALFGM) traverse the membrane as a helical segment. Topologically, residues 102–115 (KCTKVGGSDKAKAK) are cytoplasmic. Residues 116 to 136 (IACLAGIVFILSGLCSMTGCS) traverse the membrane as a helical segment. Topologically, residues 137–160 (LYANKITTEFFDPLFVEQKYELGA) are extracellular. Residues 161-181 (ALFIGWAGASLCIIGGVIFCF) traverse the membrane as a helical segment. Residues 182–228 (SISDNNKTPRYAYNGATSVMSSRTKYHGGEDFKTTNPSKQFDKNAYV) are Cytoplasmic-facing.

The protein belongs to the claudin family. Can form homodimers both in trans (interaction between CLDN10 molecules in opposing membranes) and in cis (interaction between CLDN10 molecules within one membrane). Interacts with CLDN19.

The protein resides in the cell junction. The protein localises to the tight junction. It is found in the cell membrane. The enzyme catalyses Na(+)(in) = Na(+)(out). The catalysed reaction is Li(+)(in) = Li(+)(out). It catalyses the reaction K(+)(in) = K(+)(out). It carries out the reaction Rb(+)(in) = Rb(+)(out). The enzyme catalyses Cs(+)(in) = Cs(+)(out). The catalysed reaction is NH4(+)(in) = NH4(+)(out). It catalyses the reaction methylamine(out) = methylamine(in). It carries out the reaction Mg(2+)(in) = Mg(2+)(out). The enzyme catalyses Ca(2+)(in) = Ca(2+)(out). The catalysed reaction is Sr(2+)(in) = Sr(2+)(out). It catalyses the reaction chloride(in) = chloride(out). It carries out the reaction nitrate(in) = nitrate(out). Functionally, forms paracellular channels: polymerizes in tight junction strands with cation- and anion-selective channels through the strands, conveying epithelial permeability in a process known as paracellular tight junction permeability. In sweat glands and in the thick ascending limb (TAL) of Henle's loop in kidney, it controls paracellular sodium permeability which is essential for proper sweat production and renal function. In renal proximal tubules, it conveys selective chloride over hydrogencarbonate anion permeability which is required for renal chloride reabsorption and salt homeostasis. In Pongo abelii (Sumatran orangutan), this protein is Claudin-10 (CLDN10).